The primary structure comprises 306 residues: Pantothenate kinase (306 aa).

90–97 provides a ligand contact to ATP; that stretch reads GSVAVGKS.

The protein belongs to the prokaryotic pantothenate kinase family.

It is found in the cytoplasm. It catalyses the reaction (R)-pantothenate + ATP = (R)-4'-phosphopantothenate + ADP + H(+). The protein operates within cofactor biosynthesis; coenzyme A biosynthesis; CoA from (R)-pantothenate: step 1/5. The polypeptide is Pantothenate kinase (Listeria monocytogenes serotype 4a (strain HCC23)).